A 275-amino-acid polypeptide reads, in one-letter code: MAVVTMKELLAGGVHFGHQTRRWNPKMKRFIFTERNGIYIIDLQQSLSYIERAYEFVKDTVARGGTVLFVGTKKQAQQAIAEQATRVGMPYVNQRWLGGMLTNFSTVYKRLQRLKELELLEQNGSLFGQATKKEALMLQREKEKLERTLGGIRDMTRLPAAVWIVDTKKEHIAVDEARKLGIPVVAILDTNCDPDEVDYPIPGNDDAIRSVSLLTRVIADAVAEGLMARAAARATDGKPEPEPVPGQELGADEPLADWERELLARQGVDADELGV.

Residues 232-256 (ARATDGKPEPEPVPGQELGADEPLA) are disordered.

This sequence belongs to the universal ribosomal protein uS2 family.

This Acidothermus cellulolyticus (strain ATCC 43068 / DSM 8971 / 11B) protein is Small ribosomal subunit protein uS2.